The following is a 157-amino-acid chain: Snaclec EMS16 subunit alpha (157 aa).

Positions 1 to 23 (MGRFISVSFGLLVVFLSLSGTGA) are cleaved as a signal peptide. Disulfide bonds link cysteine 27/cysteine 38, cysteine 55/cysteine 152, and cysteine 127/cysteine 144. Positions 34-153 (YDQHCYLAIG…CEDLYPFVCK (120 aa)) constitute a C-type lectin domain.

Belongs to the snaclec family. As to quaternary structure, heterodimer of subunits A and B; disulfide-linked. In terms of tissue distribution, expressed by the venom gland.

It is found in the secreted. In terms of biological role, EMS16 is a potent and selective inhibitor of alpha-2/beta-1 (ITGA2/ITGB1) integrin and acts as a potent antagonist of platelet aggregation and cell migration. Binds specifically to the I domain of the alpha-2 subunit, in a metal ion-independent fashion. This chain is Snaclec EMS16 subunit alpha, found in Echis multisquamatus (Central Asian sand viper).